The sequence spans 485 residues: Glutamyl-tRNA(Gln) amidotransferase subunit A (485 aa).

Active-site charge relay system residues include lysine 79 and serine 154. Catalysis depends on serine 178, which acts as the Acyl-ester intermediate.

This sequence belongs to the amidase family. GatA subfamily. Heterotrimer of A, B and C subunits.

It carries out the reaction L-glutamyl-tRNA(Gln) + L-glutamine + ATP + H2O = L-glutaminyl-tRNA(Gln) + L-glutamate + ADP + phosphate + H(+). Its function is as follows. Allows the formation of correctly charged Gln-tRNA(Gln) through the transamidation of misacylated Glu-tRNA(Gln) in organisms which lack glutaminyl-tRNA synthetase. The reaction takes place in the presence of glutamine and ATP through an activated gamma-phospho-Glu-tRNA(Gln). The protein is Glutamyl-tRNA(Gln) amidotransferase subunit A of Staphylococcus aureus (strain MRSA252).